Reading from the N-terminus, the 377-residue chain is MENFPTEYFLNTSVRLLEYIRYRDSNYTREERIENLHYAYNKAAHHFAQPRQQQLLKVDPKRLQASLQTIVGMVVYSWAKVSKECMADLSIHYTYTLVLDDSSDDPYAAMMNYFNDLQAGREQAHPWWALVNEHFPNVLRHFGPFCSLNLIRSTLDFFEGCWIEQYNFGGFPGSHDYPQFLRRMNGLGHCVGASLWPKEQFDERSLFLEITSAIAQMENWMVWVNDLMSFYKEFDDERDQISLVKNYVVSDEISLHEALEKLTQDTLHSSKQMVAVFSDKDPQVMVTIECFMHGYVTWHLCDHRYRLNEISEKVKEQKTEDAQKFCKFYEQAANVGAVSPSEWAYPPVAQLANVRSKDVKNVKQIEKPLLSSIELVE.

It belongs to the trichodiene synthase family.

It carries out the reaction (2E,6E)-farnesyl diphosphate = trichodiene + diphosphate. It participates in sesquiterpene biosynthesis; trichothecene biosynthesis. TS is a member of the terpene cyclase group of enzymes. It catalyzes the isomerization and cyclization of farnesyl pyro-phosphate to form trichodiene, the first cyclic intermediate in the biosynthetic pathway for trichothecenes. It serves to branch trichothecene biosynthesis from the isoprenoid pathway. The protein is Trichodiene synthase (TRI5) of Fusarium poae.